The primary structure comprises 278 residues: Sulfur carrier protein FdhD (278 aa).

The active-site Cysteine persulfide intermediate is the Cys121. 260 to 265 (FCKPGR) lines the Mo-bis(molybdopterin guanine dinucleotide) pocket.

The protein belongs to the FdhD family.

The protein resides in the cytoplasm. Functionally, required for formate dehydrogenase (FDH) activity. Acts as a sulfur carrier protein that transfers sulfur from IscS to the molybdenum cofactor prior to its insertion into FDH. This is Sulfur carrier protein FdhD from Salmonella newport (strain SL254).